A 156-amino-acid chain; its full sequence is Lipoprotein signal peptidase (156 aa).

A run of 3 helical transmembrane segments spans residues 5–25 (FFVVYLIAALVIAVDQWTKQW), 63–83 (IEWQFWLFFAAAVTAVLAIIA), and 90–110 (SNPYLFTGFGLIMGGAIGNLI). Active-site residues include Asp120 and Asp138. The chain crosses the membrane as a helical span at residues 133-153 (AFNVADMGICVGAFFVCLAVY).

The protein belongs to the peptidase A8 family.

The protein localises to the cell inner membrane. The enzyme catalyses Release of signal peptides from bacterial membrane prolipoproteins. Hydrolyzes -Xaa-Yaa-Zaa-|-(S,diacylglyceryl)Cys-, in which Xaa is hydrophobic (preferably Leu), and Yaa (Ala or Ser) and Zaa (Gly or Ala) have small, neutral side chains.. Its pathway is protein modification; lipoprotein biosynthesis (signal peptide cleavage). Functionally, this protein specifically catalyzes the removal of signal peptides from prolipoproteins. This Oleidesulfovibrio alaskensis (strain ATCC BAA-1058 / DSM 17464 / G20) (Desulfovibrio alaskensis) protein is Lipoprotein signal peptidase.